The chain runs to 90 residues: Small ribosomal subunit protein uS15c (90 aa).

Polar residues predominate over residues 1–11 (MVKNSFSSVIS). Residues 1–20 (MVKNSFSSVISQEEKKENGG) are disordered.

This sequence belongs to the universal ribosomal protein uS15 family. Part of the 30S ribosomal subunit.

It localises to the plastid. The protein resides in the chloroplast. This Cucumis sativus (Cucumber) protein is Small ribosomal subunit protein uS15c (rps15).